A 277-amino-acid polypeptide reads, in one-letter code: NADPH-dependent 7-cyano-7-deazaguanine reductase (277 aa).

83–85 provides a ligand contact to substrate; the sequence is VES. Position 85 to 86 (85 to 86) interacts with NADPH; the sequence is SK. Cys-184 serves as the catalytic Thioimide intermediate. The Proton donor role is filled by Asp-191. Residue 223 to 224 participates in substrate binding; that stretch reads HE. 252 to 253 lines the NADPH pocket; sequence RG.

It belongs to the GTP cyclohydrolase I family. QueF type 2 subfamily. In terms of assembly, homodimer.

The protein localises to the cytoplasm. The enzyme catalyses 7-aminomethyl-7-carbaguanine + 2 NADP(+) = 7-cyano-7-deazaguanine + 2 NADPH + 3 H(+). It participates in tRNA modification; tRNA-queuosine biosynthesis. Its function is as follows. Catalyzes the NADPH-dependent reduction of 7-cyano-7-deazaguanine (preQ0) to 7-aminomethyl-7-deazaguanine (preQ1). The polypeptide is NADPH-dependent 7-cyano-7-deazaguanine reductase (Cupriavidus metallidurans (strain ATCC 43123 / DSM 2839 / NBRC 102507 / CH34) (Ralstonia metallidurans)).